The chain runs to 684 residues: Early phosphoprotein p84 (684 aa).

Disordered regions lie at residues 166-301 (LGGS…MSLP), 317-336 (SSAV…HHNA), 357-393 (VVSS…AAAT), 407-452 (RAPA…SPRF), and 569-657 (SNSS…GPSF). Positions 180 to 191 (EQQRRRQEQRHE) are enriched in basic and acidic residues. The segment covering 201–220 (AGGGGGGGASGGGGGGGSGG) has biased composition (gly residues). 2 stretches are compositionally biased toward basic and acidic residues: residues 232-245 (RDPR…ERRP) and 258-272 (REAK…HEGH). A Nuclear localization signal motif is present at residues 261-264 (KRQK). The span at 285-296 (GGAGGGGGGGSG) shows a compositional bias: gly residues. The span at 326–335 (NHHHHHHHHN) shows a compositional bias: basic residues. Residues 359 to 377 (SSPSSTSPSSLLSLPRPSS) are compositionally biased toward low complexity. Positions 425–442 (STTPVSNCRVPPNSQESA) are enriched in polar residues. Pro residues predominate over residues 578-587 (PLPPPPPPPG). Gly residues predominate over residues 598 to 608 (RGGGGGGGGGR). Low complexity predominate over residues 612–622 (RQAASSSSSSS).

Belongs to the herpesviridae U79/UL112 family. As to quaternary structure, isoforms 1, 2, 3 and 4 interacts with themselves and with each other via their shared N-terminal regions; these interactions are important to both their intranuclear targeting and the recruitment of UL44 to subnuclear sites for viral replication.

The protein localises to the host nucleus. It is found in the virion. Needed for efficient replication. Recruits the DNA polymerase processivity factor to pre-replication foci. The sequence is that of Early phosphoprotein p84 (UL112/UL113) from Homo sapiens (Human).